Reading from the N-terminus, the 448-residue chain is Asparagine--tRNA ligase (448 aa).

This sequence belongs to the class-II aminoacyl-tRNA synthetase family. Homodimer.

It is found in the cytoplasm. The enzyme catalyses tRNA(Asn) + L-asparagine + ATP = L-asparaginyl-tRNA(Asn) + AMP + diphosphate + H(+). The protein is Asparagine--tRNA ligase of Streptococcus suis (strain 98HAH33).